The sequence spans 127 residues: Holo-[acyl-carrier-protein] synthase (127 aa).

Mg(2+) contacts are provided by Asp-9 and Glu-58.

Belongs to the P-Pant transferase superfamily. AcpS family. Mg(2+) serves as cofactor.

It localises to the cytoplasm. It catalyses the reaction apo-[ACP] + CoA = holo-[ACP] + adenosine 3',5'-bisphosphate + H(+). Its function is as follows. Transfers the 4'-phosphopantetheine moiety from coenzyme A to a Ser of acyl-carrier-protein. In Shewanella baltica (strain OS155 / ATCC BAA-1091), this protein is Holo-[acyl-carrier-protein] synthase.